The sequence spans 195 residues: dITP/XTP pyrophosphatase (195 aa).

8 to 13 (TNNQGK) lines the substrate pocket. Residues E39 and D68 each coordinate Mg(2+). D68 serves as the catalytic Proton acceptor. Substrate is bound by residues S69, 149–152 (FGYD), K172, and 177–178 (HR).

The protein belongs to the HAM1 NTPase family. As to quaternary structure, homodimer. Requires Mg(2+) as cofactor.

It carries out the reaction XTP + H2O = XMP + diphosphate + H(+). It catalyses the reaction dITP + H2O = dIMP + diphosphate + H(+). The catalysed reaction is ITP + H2O = IMP + diphosphate + H(+). In terms of biological role, pyrophosphatase that catalyzes the hydrolysis of nucleoside triphosphates to their monophosphate derivatives, with a high preference for the non-canonical purine nucleotides XTP (xanthosine triphosphate), dITP (deoxyinosine triphosphate) and ITP. Seems to function as a house-cleaning enzyme that removes non-canonical purine nucleotides from the nucleotide pool, thus preventing their incorporation into DNA/RNA and avoiding chromosomal lesions. The polypeptide is dITP/XTP pyrophosphatase (Staphylococcus epidermidis (strain ATCC 35984 / DSM 28319 / BCRC 17069 / CCUG 31568 / BM 3577 / RP62A)).